The chain runs to 583 residues: MAPPKHVIIIGAGAGGTATAARLAREGIKVTVVEKNNFGGGRCSLINHNGHRFDQGPSLYLMPKLFEEAFEALDEKIEDHVELLRCHNNYKVHFDDGDKIQLSSDLSRMKPEMERIEGPDGFLRFLDFMKESHTHYEGGVEMAIKQNFETIWKLIRLQYVPALFRLHIFDFVYSRAAKYFKTKKMRMAFTFQSMYMGMSPYDSPAVYNLLQYTEFAEGIWYPKGGFNTVIQKLENIATEKFGARFIYEAPVAKINTDDKGKKVTGVTLQSGEVIEADAVVCNADLVYAYHNLLPPCRWTTNTLAEKKLTSSSISFYWSLKRVVPELDVHNIFLAEAFKESFDEIFTDHKMPSELSFYVNLPSRIDPTAAPPGKDSMIVLVPIGHMKSKTNEAEDYTMIVKRARKMVLEVLERRLGLTNFIDLVEHEEVNDPSIWQKKFNLWRGSILGLSHDVLQVLWFRPSTQDSTGRYKNLFFVGASTHPGTGVPIVLAGSKLTSDQVCDHFGVKVRPSAITSSKRTYAPEDSKSFIWDIIWFLLIALFAATLVLFIAFPQYSEVNQTAASYINNLLPAAFRVPVANLSLTS.

An N-terminal signal peptide occupies residues 1-20 (MAPPKHVIIIGAGAGGTATA). The chain crosses the membrane as a helical span at residues 531 to 551 (IIWFLLIALFAATLVLFIAFP).

Belongs to the carotenoid/retinoid oxidoreductase family. It depends on NAD(+) as a cofactor.

The protein localises to the membrane. The enzyme catalyses 15-cis-phytoene + 5 A = all-trans-3,4-didehydrolycopene + 5 AH2. It participates in carotenoid biosynthesis; lycopene biosynthesis. Phytoene desaturase involved in the carotenoid biosynthesis pathway. Converts phytoene into 3,4-didehydrolycopene via the intermediary of phytofluene, zeta-carotene, neurosporene and lycopene, by introducing up to five double bonds into phytoene. The chain is Phytoene desaturase (carB) from Phycomyces blakesleeanus (strain ATCC 8743b / DSM 1359 / FGSC 10004 / NBRC 33097 / NRRL 1555).